The following is a 410-amino-acid chain: Tyrosine--tRNA ligase (410 aa).

Tyr-36 contacts L-tyrosine. The 'HIGH' region motif lies at 41-50; the sequence is ATADSLTAGH. 2 residues coordinate L-tyrosine: Tyr-169 and Gln-173. Residues 229–233 carry the 'KMSKS' region motif; that stretch reads KMGKT. Position 232 (Lys-232) interacts with ATP. Positions 343–409 constitute an S4 RNA-binding domain; the sequence is IDLITMMIDA…GKKAYHLFRA (67 aa).

The protein belongs to the class-I aminoacyl-tRNA synthetase family. TyrS type 1 subfamily. As to quaternary structure, homodimer.

The protein resides in the cytoplasm. The catalysed reaction is tRNA(Tyr) + L-tyrosine + ATP = L-tyrosyl-tRNA(Tyr) + AMP + diphosphate + H(+). Its function is as follows. Catalyzes the attachment of tyrosine to tRNA(Tyr) in a two-step reaction: tyrosine is first activated by ATP to form Tyr-AMP and then transferred to the acceptor end of tRNA(Tyr). In Lachnoclostridium phytofermentans (strain ATCC 700394 / DSM 18823 / ISDg) (Clostridium phytofermentans), this protein is Tyrosine--tRNA ligase.